The primary structure comprises 393 residues: Putative N(4)-(beta-N-acetylglucosaminyl)-L-asparaginase GH22932 (393 aa).

The segment at 15–41 is disordered; it reads ALKPITNSSSDTITPNPNLITTSRGSS. Residues 19–41 show a composition bias toward polar residues; it reads ITNSSSDTITPNPNLITTSRGSS. 2 disulfide bridges follow: cysteine 100–cysteine 105 and cysteine 199–cysteine 215. The active-site Nucleophile is threonine 246. Residues 274–277 and 297–300 each bind substrate; these read RVGD and TGDG. Cysteines 357 and 381 form a disulfide.

Belongs to the Ntn-hydrolase family. In terms of assembly, heterotetramer of two alpha and two beta chains arranged as a dimer of alpha/beta heterodimers. Post-translationally, cleaved into an alpha and beta chain by autocatalysis; this activates the enzyme. The N-terminal residue of the beta subunit is responsible for the nucleophile hydrolase activity.

It carries out the reaction N(4)-(beta-N-acetyl-D-glucosaminyl)-L-asparagine + H2O = N-acetyl-beta-D-glucosaminylamine + L-aspartate + H(+). Functionally, cleaves the GlcNAc-Asn bond which joins oligosaccharides to the peptide of asparagine-linked glycoproteins. This Drosophila grimshawi (Hawaiian fruit fly) protein is Putative N(4)-(beta-N-acetylglucosaminyl)-L-asparaginase GH22932.